The chain runs to 212 residues: 3,4-dihydroxy-2-butanone 4-phosphate synthase (212 aa).

D-ribulose 5-phosphate contacts are provided by residues 37 to 38 (RE), Asp-42, 150 to 154 (RRGHT), and Glu-174. Position 38 (Glu-38) interacts with Mg(2+). A Mg(2+)-binding site is contributed by His-153.

It belongs to the DHBP synthase family. As to quaternary structure, homodimer. Mg(2+) is required as a cofactor. It depends on Mn(2+) as a cofactor.

It carries out the reaction D-ribulose 5-phosphate = (2S)-2-hydroxy-3-oxobutyl phosphate + formate + H(+). It participates in cofactor biosynthesis; riboflavin biosynthesis; 2-hydroxy-3-oxobutyl phosphate from D-ribulose 5-phosphate: step 1/1. Its function is as follows. Catalyzes the conversion of D-ribulose 5-phosphate to formate and 3,4-dihydroxy-2-butanone 4-phosphate. This chain is 3,4-dihydroxy-2-butanone 4-phosphate synthase, found in Shewanella piezotolerans (strain WP3 / JCM 13877).